A 25-amino-acid polypeptide reads, in one-letter code: Granule-bound starch synthase 1, chloroplastic/amyloplastic (25 aa).

Residue Lys16 participates in ADP-alpha-D-glucose binding.

The protein belongs to the glycosyltransferase 1 family. Bacterial/plant glycogen synthase subfamily. As to expression, expressed in endosperm.

The protein resides in the plastid. Its subcellular location is the chloroplast. It localises to the amyloplast. It carries out the reaction an NDP-alpha-D-glucose + [(1-&gt;4)-alpha-D-glucosyl](n) = [(1-&gt;4)-alpha-D-glucosyl](n+1) + a ribonucleoside 5'-diphosphate + H(+). It functions in the pathway glycan biosynthesis; starch biosynthesis. Required for the synthesis of amylose in endosperm. The sequence is that of Granule-bound starch synthase 1, chloroplastic/amyloplastic from Fagopyrum esculentum (Common buckwheat).